The chain runs to 204 residues: Large ribosomal subunit protein uL22m (204 aa).

The transit peptide at 1–27 (MAASITASVWGTLLKIHRGLTASGCLP) directs the protein to the mitochondrion.

It belongs to the universal ribosomal protein uL22 family. As to quaternary structure, component of the mitochondrial ribosome large subunit (39S) which comprises a 16S rRNA and about 50 distinct proteins.

The protein localises to the mitochondrion. The chain is Large ribosomal subunit protein uL22m (mrpl22) from Xenopus tropicalis (Western clawed frog).